Reading from the N-terminus, the 241-residue chain is C-type lectin domain family 9 member A (241 aa).

At 1 to 34 the chain is on the cytoplasmic side; that stretch reads MHEEEIYTSLQWDIPTSEASQKCPSLSKCPGTWC. The ITAM-like motif lies at 5–10; sequence EIYTSL. Residues 35-55 traverse the membrane as a helical; Signal-anchor for type II membrane protein segment; that stretch reads IVTVISCVVCVGLLAASIFLG. Over 56–241 the chain is Extracellular; that stretch reads IKFSQVSSLV…CEKKAFGSCI (186 aa). N-linked (GlcNAc...) asparagine glycosylation is found at N81 and N88. An intrachain disulfide couples C113 to C124. Residues 120-233 enclose the C-type lectin domain; sequence NGKSCYYAFD…CSNWKYFICE (114 aa). N-linked (GlcNAc...) asparagine glycans are attached at residues N135, N161, and N223. Intrachain disulfides connect C141–C232 and C211–C224.

Homodimer. In terms of processing, N-glycosylated. High expression in the spleen, moderate to low levels in several other tissues and cell types, but no detectable expression in skin dendritic cells or CD4(+) T-cells.

It is found in the membrane. In terms of biological role, functions as an endocytic receptor on a small subset of myeloid cells specialized for the uptake and processing of material from dead cells. Recognizes filamentous form of actin in association with particular actin-binding domains of cytoskeletal proteins, including spectrin, exposed when cell membranes are damaged, and mediate the cross-presentation of dead-cell associated antigens in a Syk-dependent manner. This Rattus norvegicus (Rat) protein is C-type lectin domain family 9 member A (Clec9a).